A 340-amino-acid polypeptide reads, in one-letter code: Sulfotransferase 2B1 (340 aa).

67-72 (KSGTNW) contributes to the 3'-phosphoadenylyl sulfate binding site. The substrate site is built by Trp95 and Trp100. His122 acts as the Proton acceptor in catalysis. Residues Arg144, Ser152, Tyr207, 241–246 (SAFAAM), and 271–273 (RKG) contribute to the 3'-phosphoadenylyl sulfate site. A disordered region spans residues 301-340 (LPSFPWDRSAEDGSPDGETEPSPSPSPGLASDDPNPGSSQ).

Belongs to the sulfotransferase 1 family. As to expression, isoform 1 is expressed in skin and testis. Higher level of isoform 2 expressed in skin and intestine, moderate level in the kidney, low level in liver, stomach and placenta.

Its subcellular location is the cytoplasm. The protein resides in the cytosol. It localises to the microsome. The protein localises to the nucleus. The enzyme catalyses an alcohol + 3'-phosphoadenylyl sulfate = an alkyl sulfate + adenosine 3',5'-bisphosphate + H(+). It carries out the reaction pregnenolone + 3'-phosphoadenylyl sulfate = pregnenolone sulfate + adenosine 3',5'-bisphosphate + H(+). The catalysed reaction is 3beta-hydroxyandrost-5-en-17-one + 3'-phosphoadenylyl sulfate = dehydroepiandrosterone 3-sulfate + adenosine 3',5'-bisphosphate + H(+). It catalyses the reaction cholesterol + 3'-phosphoadenylyl sulfate = cholesterol sulfate + adenosine 3',5'-bisphosphate + H(+). In terms of biological role, sulfotransferase that utilizes 3'-phospho-5'-adenylyl sulfate (PAPS) as sulfonate donor to catalyze the sulfate conjugation. Sulfonation increases the water solubility of most compounds, and therefore their renal excretion, but it can also result in bioactivation to form active metabolites. Sulfonates cholesterol. Catalyzes sulfation of the 3beta-hydroxyl groups of steroids, such as, pregnenolone and dehydroepiandrosterone (DHEA). Conjugates efficiently cholesterol but has a greater affinity for pregnenolone sulfation. Does not show high activity with DHEA. Plays a role in epidermal cholesterol metabolism and in the regulation of epidermal proliferation and differentiation. Functionally, prefers pregnenolone over DHEA as a substrate and does not sulfate cholesterol. The sequence is that of Sulfotransferase 2B1 from Rattus norvegicus (Rat).